Consider the following 349-residue polypeptide: 2-oxoglutarate-Fe(II) type oxidoreductase hxnY (349 aa).

A Fe2OG dioxygenase domain is found at 178–282 (GVATMRMLHY…RYSIPFFFSG (105 aa)). Residues His-205, Asp-207, and His-263 each contribute to the Fe cation site. Residue Arg-273 coordinates 2-oxoglutarate.

The protein belongs to the iron/ascorbate-dependent oxidoreductase family. Fe(2+) serves as cofactor.

In terms of biological role, 2-oxoglutarate-Fe(II) type oxidoreductase, part of the hnx cluster involved in the purine degradation. The nicotinate hydroxylase hnxS accepts nicotinate as a substrate and catalyzes the first step of nicotinate catabolism. The major facilitator-type transporters hxnP and hxnZ are probably involved in the uptake of nicotinate-derived metabolites, and the oxidoreductases hxnT and hxnY in the further metabolism of 6-OH nicotinic acid. The protein is 2-oxoglutarate-Fe(II) type oxidoreductase hxnY of Emericella nidulans (strain FGSC A4 / ATCC 38163 / CBS 112.46 / NRRL 194 / M139) (Aspergillus nidulans).